Reading from the N-terminus, the 127-residue chain is Profilin (127 aa).

The protein belongs to the profilin family. As to quaternary structure, occurs in many kinds of cells as a complex with monomeric actin in a 1:1 ratio.

The protein localises to the cytoplasm. Its subcellular location is the cytoskeleton. Functionally, binds to actin and affects the structure of the cytoskeleton. At high concentrations, profilin prevents the polymerization of actin, whereas it enhances it at low concentrations. By binding to PIP2, it inhibits the formation of IP3 and DG. In S.pombe, it is essential for cytokinesis. In Schizosaccharomyces pombe (strain 972 / ATCC 24843) (Fission yeast), this protein is Profilin (cdc3).